A 740-amino-acid chain; its full sequence is E3 ubiquitin-protein ligase WAV3 (740 aa).

Residues 14–105 (PRNSDAAAPD…AISNPSSPRS (92 aa)) are disordered. Residues 49–67 (SGGSNPSTPRSTSSPSLRC) are compositionally biased toward low complexity. A compositionally biased stretch (polar residues) spans 71 to 90 (DAQTPTAEQTSTPRSATKSP). The segment at 122–167 (CGICLNSVKTGQGTAKYTAECSHAFHFPCIADYVRKQGKLVCPVCN) adopts an RING-type; atypical zinc-finger fold. Positions 332-476 (DLVVVVDVGG…IPVTEHGFGE (145 aa)) constitute a VWFA domain. Residues 677-709 (QSQHQQQHNQRRRGSERETTTTMTLMDENGEPL) form a disordered region.

As to quaternary structure, interacts with SINAT1, SINAT2, SINAT3, SINAT4, SINAT5, TOR1/SPR2 and FIP2. As to expression, expressed in root tips and leaf primordia.

The enzyme catalyses S-ubiquitinyl-[E2 ubiquitin-conjugating enzyme]-L-cysteine + [acceptor protein]-L-lysine = [E2 ubiquitin-conjugating enzyme]-L-cysteine + N(6)-ubiquitinyl-[acceptor protein]-L-lysine.. In terms of biological role, E3 ubiquitin-protein ligase involved in the regulation of root growth. Acts as a positive regulator of root gravitropism. Possesses E3 protein ligase activity in vitro. This is E3 ubiquitin-protein ligase WAV3 from Arabidopsis thaliana (Mouse-ear cress).